The sequence spans 228 residues: uncharacterized protein (228 aa).

S-adenosyl-L-methionine is bound by residues 77 to 79, G113, V133, and 140 to 142; these read TTA and PSL.

Belongs to the class IV-like SAM-binding methyltransferase superfamily. RNA methyltransferase TrmH family.

This is an uncharacterized protein from Escherichia coli (strain K12).